A 210-amino-acid polypeptide reads, in one-letter code: Ribonuclease HII (210 aa).

In terms of domain architecture, RNase H type-2 spans 18–210 (GLIAGVDEVG…FKPVKALLGL (193 aa)). A divalent metal cation-binding residues include Asp24, Glu25, and Asp116.

This sequence belongs to the RNase HII family. Mn(2+) is required as a cofactor. The cofactor is Mg(2+).

It is found in the cytoplasm. It carries out the reaction Endonucleolytic cleavage to 5'-phosphomonoester.. Endonuclease that specifically degrades the RNA of RNA-DNA hybrids. In Shewanella baltica (strain OS155 / ATCC BAA-1091), this protein is Ribonuclease HII.